The primary structure comprises 167 residues: MKKIIGLFFIIILIVINISILAYDYPKAEQEQKWDEVDSIAGEGGLIFRPGRVKNESTKAVGCTVNKYLWQAALEIISFIPLASVDSNGGVIITEWYSPRSNTNFRFKINIFIKDDVISPDAIEVKIFEEILKNKQWVLNENTSNLAIMLEDKILRKARDIYINSVR.

A helical transmembrane segment spans residues 4–24 (IIGLFFIIILIVINISILAYD).

It is found in the membrane. This is an uncharacterized protein from Rickettsia prowazekii (strain Madrid E).